The chain runs to 434 residues: Arginine/serine-rich coiled-coil protein 2 (434 aa).

Residues 1–27 show a composition bias toward basic and acidic residues; that stretch reads MAASDTERDGLAPEKTSPDRDKKKEQS. Residues 1-230 form a disordered region; the sequence is MAASDTERDG…PSPPPFRGRN (230 aa). Position 2 is an N-acetylalanine (Ala-2). Ser-4 is modified (phosphoserine). A phosphothreonine mark is found at Thr-6 and Thr-16. Phosphoserine is present on residues Ser-17, Ser-30, and Ser-32. A compositionally biased stretch (basic residues) spans 35–51; that stretch reads ASKHHYSRSRSRSRERK. Positions 66–111 are enriched in basic and acidic residues; sequence RSKEGRRHESKDKSSKKHKSEEHNDKEHSSDKGRERLNSSENGEDR. The residue at position 104 (Ser-104) is a Phosphoserine. The segment covering 112 to 214 has biased composition (basic residues); sequence HKRKERKSSR…KRIEKPRRFS (103 aa). Residues 230-270 adopt a coiled-coil conformation; it reads NTAMDAQEALARRLERAKKLQEQREKEMVEKQKQQEIAAAA. Lys-375 is covalently cross-linked (Glycyl lysine isopeptide (Lys-Gly) (interchain with G-Cter in SUMO1); alternate). Lys-375 participates in a covalent cross-link: Glycyl lysine isopeptide (Lys-Gly) (interchain with G-Cter in SUMO2); alternate. Ser-376 carries the phosphoserine modification.

The protein belongs to the RSRC2 family.

This is Arginine/serine-rich coiled-coil protein 2 (RSRC2) from Homo sapiens (Human).